A 581-amino-acid polypeptide reads, in one-letter code: Proline--tRNA ligase (581 aa).

It belongs to the class-II aminoacyl-tRNA synthetase family. ProS type 1 subfamily. In terms of assembly, homodimer.

It localises to the cytoplasm. The enzyme catalyses tRNA(Pro) + L-proline + ATP = L-prolyl-tRNA(Pro) + AMP + diphosphate. In terms of biological role, catalyzes the attachment of proline to tRNA(Pro) in a two-step reaction: proline is first activated by ATP to form Pro-AMP and then transferred to the acceptor end of tRNA(Pro). As ProRS can inadvertently accommodate and process non-cognate amino acids such as alanine and cysteine, to avoid such errors it has two additional distinct editing activities against alanine. One activity is designated as 'pretransfer' editing and involves the tRNA(Pro)-independent hydrolysis of activated Ala-AMP. The other activity is designated 'posttransfer' editing and involves deacylation of mischarged Ala-tRNA(Pro). The misacylated Cys-tRNA(Pro) is not edited by ProRS. The protein is Proline--tRNA ligase of Azoarcus sp. (strain BH72).